The sequence spans 562 residues: Glutamyl-tRNA(Gln) amidotransferase subunit B, chloroplastic/mitochondrial (562 aa).

The tract at residues 48-76 (SVASNSKREPRPVKTRVMTQERGSGETQT) is disordered. Polar residues predominate over residues 64–76 (VMTQERGSGETQT).

This sequence belongs to the GatB/GatE family. GatB subfamily. As to quaternary structure, subunit of the heterotrimeric GatCAB amidotransferase (AdT) complex, composed of A, B and C subunits.

Its subcellular location is the mitochondrion. It localises to the plastid. The protein localises to the chloroplast. The catalysed reaction is L-glutamyl-tRNA(Gln) + L-glutamine + ATP + H2O = L-glutaminyl-tRNA(Gln) + L-glutamate + ADP + phosphate + H(+). In terms of biological role, allows the formation of correctly charged Gln-tRNA(Gln) through the transamidation of misacylated Glu-tRNA(Gln) in chloroplasts and mitochondria. The reaction takes place in the presence of glutamine and ATP through an activated gamma-phospho-Glu-tRNA(Gln). The polypeptide is Glutamyl-tRNA(Gln) amidotransferase subunit B, chloroplastic/mitochondrial (Physcomitrium patens (Spreading-leaved earth moss)).